Here is a 1149-residue protein sequence, read N- to C-terminus: cGMP-specific 3',5'-cyclic phosphodiesterase (1149 aa).

Low complexity-rich tracts occupy residues M1–S19 and A31–S47. The segment at M1–D175 is disordered. A compositionally biased stretch (polar residues) spans K48–I59. The span at S60–G85 shows a compositional bias: low complexity. Residues Q96–S108 show a composition bias toward polar residues. Residues S132 to Q158 show a composition bias toward low complexity. 2 consecutive GAF domains span residues D278–I430 and N462–I643. Residues S673 to V996 enclose the PDEase domain. H749 serves as the catalytic Proton donor. A divalent metal cation is bound by residues H753, H789, D790, and D900. Disordered regions lie at residues Q1037 to L1066 and S1096 to L1149. 2 stretches are compositionally biased toward basic and acidic residues: residues G1042–R1053 and S1096–S1106. Residues A1115–M1135 show a composition bias toward low complexity. Basic residues predominate over residues S1139–L1149. Cysteine methyl ester is present on C1146. A lipid anchor (S-farnesyl cysteine) is attached at C1146. Positions A1147 to L1149 are cleaved as a propeptide — removed in mature form.

Belongs to the cyclic nucleotide phosphodiesterase family. As to quaternary structure, interacts with PrBP. Requires a divalent metal cation as cofactor.

The protein resides in the cell membrane. The enzyme catalyses 3',5'-cyclic GMP + H2O = GMP + H(+). Functionally, has a role regulating cGMP transport in Malpighian tubule principal cells. The polypeptide is cGMP-specific 3',5'-cyclic phosphodiesterase (Drosophila yakuba (Fruit fly)).